The chain runs to 315 residues: Methionyl-tRNA formyltransferase (315 aa).

Residue 113–116 (SLLP) participates in (6S)-5,6,7,8-tetrahydrofolate binding.

It belongs to the Fmt family.

The enzyme catalyses L-methionyl-tRNA(fMet) + (6R)-10-formyltetrahydrofolate = N-formyl-L-methionyl-tRNA(fMet) + (6S)-5,6,7,8-tetrahydrofolate + H(+). Attaches a formyl group to the free amino group of methionyl-tRNA(fMet). The formyl group appears to play a dual role in the initiator identity of N-formylmethionyl-tRNA by promoting its recognition by IF2 and preventing the misappropriation of this tRNA by the elongation apparatus. This is Methionyl-tRNA formyltransferase from Pectobacterium atrosepticum (strain SCRI 1043 / ATCC BAA-672) (Erwinia carotovora subsp. atroseptica).